The primary structure comprises 354 residues: Ferrochelatase (354 aa).

Residues histidine 214 and glutamate 295 each contribute to the Fe cation site.

This sequence belongs to the ferrochelatase family.

It localises to the cytoplasm. The enzyme catalyses heme b + 2 H(+) = protoporphyrin IX + Fe(2+). It functions in the pathway porphyrin-containing compound metabolism; protoheme biosynthesis; protoheme from protoporphyrin-IX: step 1/1. Catalyzes the ferrous insertion into protoporphyrin IX. The polypeptide is Ferrochelatase (Burkholderia lata (strain ATCC 17760 / DSM 23089 / LMG 22485 / NCIMB 9086 / R18194 / 383)).